Here is a 606-residue protein sequence, read N- to C-terminus: Proton myo-inositol cotransporter hmit-1.1 (606 aa).

The Cytoplasmic segment spans residues 1–20 (MVAVAAFSSSGQDKPAHTPK). The helical transmembrane segment at 21–41 (LGLFVYILAAASVIGGFLFGY) threads the bilayer. At 42–63 (DTSVVSAAMLYMPDAPGLKPMD) the chain is on the extracellular side. A helical membrane pass occupies residues 64–84 (TVWQEVLVSISPGMAAVGSLM). At 85 to 96 (SGTSSDYIGRRK) the chain is on the cytoplasmic side. The chain crosses the membrane as a helical span at residues 97 to 117 (VILGASAIFTIGALVCAASVN). Position 118 (lysine 118) is a topological domain, extracellular. A helical transmembrane segment spans residues 119–139 (IMLLVGRVLLGIAIGFASMIV). Topologically, residues 140 to 152 (PVYLGETAPTHVR) are cytoplasmic. A helical membrane pass occupies residues 153-173 (GMLVAAFALMISFGQVVANIT). Over 174-188 (GGAFSYIDPYNVGWR) the chain is Extracellular. Residues 189-209 (LMFAFAAVPSIIQFVCFMFLP) traverse the membrane as a helical segment. The Cytoplasmic portion of the chain corresponds to 210–278 (ETPRWLYENG…RILKTPHVLK (69 aa)). The helical transmembrane segment at 279 to 299 (ACFIGSMLQAFQQLAGINTIL) threads the bilayer. Residues 300–317 (YYTADIIRSSGISNNHTT) lie on the Extracellular side of the membrane. An N-linked (GlcNAc...) asparagine glycan is attached at asparagine 314. A helical membrane pass occupies residues 318 to 338 (IWISVLLSLCNFIGPFVPMSL). Over 339-345 (IEKVGRR) the chain is Cytoplasmic. A helical membrane pass occupies residues 346 to 366 (IIFLFSCGLVVLSLVFIGVAF). Topologically, residues 367 to 464 (LLVNHDSAAT…EKYYCDTKYT (98 aa)) are extracellular. Residues asparagine 387 and asparagine 445 are each glycosylated (N-linked (GlcNAc...) asparagine). Residues 465 to 485 (LLPIIACGVYLLTFSSGFTSL) form a helical membrane-spanning segment. Residues 486-501 (PWVLNSEFYPMWARST) lie on the Cytoplasmic side of the membrane. The helical transmembrane segment at 502–522 (CVAISTTSNWVFNLIIALTYL) threads the bilayer. Over 523-531 (SLTQVIGKY) the chain is Extracellular. A helical membrane pass occupies residues 532–552 (GAFWLYAGLTVIAFIFILFLV). Residues 553–606 (PETKGYSIEEVEMLFMNKKQRREAESRRRETVTEVRSRMNSTVSFGQHNEVHKY) are Cytoplasmic-facing.

It belongs to the major facilitator superfamily. Sugar transporter (TC 2.A.1.1) family. As to expression, expressed in the intestine.

It is found in the cell membrane. It catalyses the reaction myo-inositol(out) + H(+)(out) = myo-inositol(in) + H(+)(in). Functionally, h(+)-myo-inositol cotransporter. Probably by promoting the transport of myo-inositol regulates intracellular osmosis in response to hyperosmotic stress. This chain is Proton myo-inositol cotransporter hmit-1.1, found in Caenorhabditis elegans.